The chain runs to 652 residues: RNA-binding KH domain-containing protein RCF3 (652 aa).

The span at 1-14 (MERSRSKRNYHYDQ) shows a compositional bias: basic and acidic residues. Positions 1–63 (MERSRSKRNY…NGRPSKSHPE (63 aa)) are disordered. A compositionally biased stretch (gly residues) spans 34–55 (FGGGGGGNNRYRGGGGGGGGNG). 2 consecutive KH domains span residues 67-139 (TTTY…QEAL) and 175-245 (RVVT…LAIV). The segment at 253-307 (QHRDRSNFQGRSHSPERSFAAAGDDYMPQLRRQSSDRFPRGNFRNNNFSSRQSNY) is disordered. Positions 292–306 (RGNFRNNNFSSRQSN) are enriched in low complexity. KH domains are found at residues 324–391 (ELVF…QEAL), 408–476 (LITT…LVEL), and 576–640 (RSTL…QSLL).

As to quaternary structure, homodimer. Interacts with CPL1. Interacts with RS40 and RS41. Interacts with DRB1/HYL1 and SE. Interacts with CPL2. In terms of tissue distribution, expressed in roots, cotyledons, leaves, flowers and siliques.

The protein resides in the nucleus. Its subcellular location is the nucleus speckle. Functionally, acts as a negative regulator of osmotic stress-induced gene expression. Involved in the regulation of thermotolerance responses under heat stress. Functions as an upstream regulator of heat stress transcription factor (HSF) genes. Negatively regulates HSFA1A, HSFA1B and HSFA1D, but positively controls the expression of HSFA1E, HSFA3, HSFA9, HSFB3, and DREB2C. Forms a complex with CPL1 that modulates co-transcriptional processes such as mRNA capping and polyadenylation, and functions to repress stress-inducible gene expression. Regulates pre-mRNA processing under salt stress. Involved in primary miRNA processing and pri-miRNA biogenesis. Binds both intronless and intron-containing pri-miRNAs. Acts as a regulator of biotic stress response gene expression and basal JA-mediated responses involved in defense. Acts as a negative regulator of resistance to the fungal pathogen Fusarium oxysporum. In Arabidopsis thaliana (Mouse-ear cress), this protein is RNA-binding KH domain-containing protein RCF3.